The following is a 319-amino-acid chain: RNA exonuclease 4 (319 aa).

The tract at residues 1–75 (MAALSSNWKK…GGVHSSKIEE (75 aa)) is disordered. The Exonuclease domain occupies 132–293 (KYIAIDCEMV…FRKHKSAFDV (162 aa)). The interval 295–319 (HANRYAPKTASGGGQKGNKPKKKKK) is disordered.

The protein belongs to the REXO4 family.

Its subcellular location is the nucleus. Its function is as follows. Exoribonuclease involved in ribosome biosynthesis. Involved in the processing of ITS1, the internal transcribed spacer localized between the 18S and 5.8S rRNAs. The protein is RNA exonuclease 4 (REX4) of Gibberella zeae (strain ATCC MYA-4620 / CBS 123657 / FGSC 9075 / NRRL 31084 / PH-1) (Wheat head blight fungus).